The following is a 326-amino-acid chain: Probable cell division protein WhiA (326 aa).

The segment at residues 275–308 (SLEELGQLADPPLTKDAIAGRIRRLLAMADKRAA) is a DNA-binding region (H-T-H motif).

The protein belongs to the WhiA family.

Functionally, involved in cell division and chromosome segregation. The protein is Probable cell division protein WhiA of Thermobifida fusca (strain YX).